A 666-amino-acid polypeptide reads, in one-letter code: Probable potassium transport system protein Kup (666 aa).

Helical transmembrane passes span G16 to M36, I58 to L78, P100 to T120, I141 to G161, F165 to L185, I221 to L241, W253 to A273, L292 to I312, L343 to F363, Y373 to I393, P399 to A419, and F424 to I444.

It belongs to the HAK/KUP transporter (TC 2.A.72) family.

It localises to the cell membrane. The enzyme catalyses K(+)(in) + H(+)(in) = K(+)(out) + H(+)(out). Transport of potassium into the cell. Likely operates as a K(+):H(+) symporter. The polypeptide is Probable potassium transport system protein Kup (Streptococcus pyogenes serotype M18 (strain MGAS8232)).